Here is a 257-residue protein sequence, read N- to C-terminus: Hydroxyacylglutathione hydrolase (257 aa).

Residues histidine 53, histidine 55, aspartate 57, histidine 58, histidine 109, aspartate 126, and histidine 164 each contribute to the Zn(2+) site.

Belongs to the metallo-beta-lactamase superfamily. Glyoxalase II family. Monomer. The cofactor is Zn(2+).

The enzyme catalyses an S-(2-hydroxyacyl)glutathione + H2O = a 2-hydroxy carboxylate + glutathione + H(+). The protein operates within secondary metabolite metabolism; methylglyoxal degradation; (R)-lactate from methylglyoxal: step 2/2. Thiolesterase that catalyzes the hydrolysis of S-D-lactoyl-glutathione to form glutathione and D-lactic acid. The sequence is that of Hydroxyacylglutathione hydrolase from Baumannia cicadellinicola subsp. Homalodisca coagulata.